Consider the following 20-residue polypeptide: Unknown protein from 2D-PAGE (20 aa).

The protein is Unknown protein from 2D-PAGE of Nicotiana tabacum (Common tobacco).